A 100-amino-acid polypeptide reads, in one-letter code: NADH-quinone oxidoreductase subunit K (100 aa).

Helical transmembrane passes span 1 to 21, 28 to 48, and 64 to 84; these read MIGL…GLAG, ILLL…GFVA, and FIIA…ILWF.

The protein belongs to the complex I subunit 4L family. As to quaternary structure, NDH-1 is composed of 14 different subunits. Subunits NuoA, H, J, K, L, M, N constitute the membrane sector of the complex.

It is found in the cell inner membrane. The enzyme catalyses a quinone + NADH + 5 H(+)(in) = a quinol + NAD(+) + 4 H(+)(out). Its function is as follows. NDH-1 shuttles electrons from NADH, via FMN and iron-sulfur (Fe-S) centers, to quinones in the respiratory chain. The immediate electron acceptor for the enzyme in this species is believed to be ubiquinone. Couples the redox reaction to proton translocation (for every two electrons transferred, four hydrogen ions are translocated across the cytoplasmic membrane), and thus conserves the redox energy in a proton gradient. The sequence is that of NADH-quinone oxidoreductase subunit K from Helicobacter pylori (strain B38).